Consider the following 407-residue polypeptide: Patatin-like protein 2 (407 aa).

The region spanning 22–228 (LSIDGGGIRG…AANNPALLAI (207 aa)) is the PNPLA domain. Residues 26 to 31 (GGGIRG) carry the GXGXXG motif. Positions 64 to 68 (GTSTG) match the GXSXG motif. Ser-66 (nucleophile) is an active-site residue. Asp-215 acts as the Proton acceptor in catalysis. The DGA/G signature appears at 215–217 (DGG). Ser-398 bears the Phosphoserine mark.

This sequence belongs to the patatin family. As to expression, expressed specifically in roots.

The protein localises to the cytoplasm. Possesses non-specific lipolytic acyl hydrolase (LAH) activity. Catalyzes the hydrolysis of the galactolipids monogalactosyldiacylglycerol (MGDG) and digalactosyldiacylglycerol (DGDG), and less efficiently the phoshpolipids phosphatidylcholine (PC), phosphatidylethanolamine (PE), phosphatidylglycerol (PG), phosphatidic acid (PA), phosphatidylserine (PS) and phosphatidylinositol (PI). Favors the release of fatty acid at the sn-1 position for PC or PE and the sn-2 position for PG, PA, PS and PI. Negatively affects disease resistance to the necrotic fungal pathogen Botrytis cinerea and the avirulent bacteria Pseudomonas syringae by promoting cell death and reducing the efficiency of the hypersensitive response, respectively. However, PLP2 contributes to resistance to cucumber mosaic virus (CMV), an obligate parasite inducing hypersensitive response. May negatively regulate oxylipin production, possibly via participating in membrane repair that includes removal of oxidatively modified lipids. This is Patatin-like protein 2 (PLP2) from Arabidopsis thaliana (Mouse-ear cress).